A 364-amino-acid chain; its full sequence is Fructose-bisphosphate aldolase A (364 aa).

Position 5 is a phosphotyrosine (Tyr5). Position 9 is a phosphothreonine (Thr9). Phosphoserine is present on residues Ser36 and Ser39. N6-acetyllysine; alternate is present on Lys42. A Glycyl lysine isopeptide (Lys-Gly) (interchain with G-Cter in SUMO1); alternate cross-link involves residue Lys42. A Glycyl lysine isopeptide (Lys-Gly) (interchain with G-Cter in SUMO2); alternate cross-link involves residue Lys42. Arg43 contributes to the beta-D-fructose 1,6-bisphosphate binding site. The residue at position 46 (Ser46) is a Phosphoserine. Position 99 is an N6-(2-hydroxyisobutyryl)lysine (Lys99). N6-acetyllysine is present on Lys108. Lys111 carries the N6-acetyllysine; alternate modification. Lys111 is modified (N6-malonyllysine; alternate). Ser132 carries the post-translational modification Phosphoserine. An N6-(2-hydroxyisobutyryl)lysine modification is found at Lys147. Residue Glu188 is the Proton acceptor of the active site. The active-site Schiff-base intermediate with dihydroxyacetone-P is Lys230. The residue at position 272 (Ser272) is a Phosphoserine. Residues 272–274, Ser301, and Arg304 contribute to the beta-D-fructose 1,6-bisphosphate site; that span reads SGG. The residue at position 312 (Lys312) is an N6-malonyllysine. At Lys330 the chain carries N6-acetyllysine.

It belongs to the class I fructose-bisphosphate aldolase family. In terms of assembly, homotetramer. Interacts with SNX9 and WAS. Interacts with FBP2; the interaction blocks FBP2 inhibition by physiological concentrations of AMP and reduces inhibition by Ca(2+).

Its subcellular location is the cytoplasm. It localises to the myofibril. It is found in the sarcomere. The protein localises to the i band. The protein resides in the m line. It catalyses the reaction beta-D-fructose 1,6-bisphosphate = D-glyceraldehyde 3-phosphate + dihydroxyacetone phosphate. The protein operates within carbohydrate degradation; glycolysis; D-glyceraldehyde 3-phosphate and glycerone phosphate from D-glucose: step 4/4. Its function is as follows. Catalyzes the reversible conversion of beta-D-fructose 1,6-bisphosphate (FBP) into two triose phosphate and plays a key role in glycolysis and gluconeogenesis. In addition, may also function as scaffolding protein. This Mus musculus (Mouse) protein is Fructose-bisphosphate aldolase A (Aldoa).